The following is an 80-amino-acid chain: Inner kinetochore subunit MHF2 (80 aa).

The protein belongs to the CENP-X/MHF2 family. In terms of assembly, the MHF histone-fold complex is a heterotetramer of 2 MHF1-MHF2 heterodimers. Together with MPH1/FANCM, forms the FANCM-MHF complex. Component of the inner kinetochore constitutive centromere-associated network (CCAN) (also known as central kinetochore CTF19 complex in yeast), which is composed of at least AME1, CHL4, CNN1, CTF3, CTF19, IML3, MCM16, MCM21, MCM22, MHF1, MHF2, MIF2, NKP1, NKP2, OKP1 and WIP1.

Functionally, DNA-binding component of a FANCM-MHF complex involved in DNA damage repair and genome maintenance. FANCM-MHF promotes gene conversion at blocked replication forks, probably by reversal of the stalled fork. Component of the kinetochore, a multiprotein complex that assembles on centromeric DNA and attaches chromosomes to spindle microtubules, mediating chromosome segregation and sister chromatid segregation during meiosis and mitosis. Component of the inner kinetochore constitutive centromere-associated network (CCAN), which serves as a structural platform for outer kinetochore assembly. The chain is Inner kinetochore subunit MHF2 from Saccharomyces cerevisiae (strain ATCC 204508 / S288c) (Baker's yeast).